The sequence spans 260 residues: HTH-type transcriptional repressor NanR (260 aa).

The 69-residue stretch at 27 to 95 folds into the HTH gntR-type domain; the sequence is KKLSEMVEEE…NGERARISRP (69 aa). A DNA-binding region (H-T-H motif) is located at residues 55–74; it reads ERELMAFFNVGRPSVREALA.

The protein belongs to the NanR family.

Transcriptional repressor that controls expression of the genes required for the catabolism of sialic acids. This is HTH-type transcriptional repressor NanR from Edwardsiella tarda (strain FL6-60).